A 242-amino-acid polypeptide reads, in one-letter code: MTSDINALKYKKVLLKVSGEALMGDKQFGHEYDVIKKIAGDIKEVIDLGVEVTIVVGGGNIYRGINAALVGMDRASADYIGMLATVINALTLQNVMESLNIYTRVLSAIPMMSVCEPYIRRKAKRHMEKKRVVIFAGGTGNPFCTTDSAAVLRAIEMNCDILLKATQVDGVYDSDPKKNPNAKKYFTISYKDVITNNLQVMDMAAIAVAQENKLPIRIFSIKDQGNFAKVIQDKGKYTTIEE.

16-19 contributes to the ATP binding site; the sequence is KVSG. Glycine 58 serves as a coordination point for UMP. Positions 59 and 63 each coordinate ATP. UMP contacts are provided by residues aspartate 78 and 139 to 146; that span reads TGNPFCTT. Threonine 166, glutamine 167, tyrosine 172, and aspartate 175 together coordinate ATP.

It belongs to the UMP kinase family. In terms of assembly, homohexamer.

It is found in the cytoplasm. It catalyses the reaction UMP + ATP = UDP + ADP. The protein operates within pyrimidine metabolism; CTP biosynthesis via de novo pathway; UDP from UMP (UMPK route): step 1/1. Its activity is regulated as follows. Inhibited by UTP. In terms of biological role, catalyzes the reversible phosphorylation of UMP to UDP. This Rickettsia canadensis (strain McKiel) protein is Uridylate kinase.